Here is an 89-residue protein sequence, read N- to C-terminus: MSITVEEKARLIKEYATKEGDTGSPEVQVAVLSSRIATLTEHFKAHKKDNHSRRGLLMMVAQRRKLLDYLKKKDEGRYTALIARLGLRR.

This sequence belongs to the universal ribosomal protein uS15 family. In terms of assembly, part of the 30S ribosomal subunit. Forms a bridge to the 50S subunit in the 70S ribosome, contacting the 23S rRNA.

In terms of biological role, one of the primary rRNA binding proteins, it binds directly to 16S rRNA where it helps nucleate assembly of the platform of the 30S subunit by binding and bridging several RNA helices of the 16S rRNA. Forms an intersubunit bridge (bridge B4) with the 23S rRNA of the 50S subunit in the ribosome. This Cereibacter sphaeroides (strain ATCC 17023 / DSM 158 / JCM 6121 / CCUG 31486 / LMG 2827 / NBRC 12203 / NCIMB 8253 / ATH 2.4.1.) (Rhodobacter sphaeroides) protein is Small ribosomal subunit protein uS15.